A 362-amino-acid polypeptide reads, in one-letter code: sn-glycerol-3-phosphate import ATP-binding protein UgpC (362 aa).

The ABC transporter domain occupies 4–235; it reads LTLQSVKKTY…PATVFVASFI (232 aa). Position 37–44 (37–44) interacts with ATP; sequence GPSGCGKS.

Belongs to the ABC transporter superfamily. sn-glycerol-3-phosphate importer (TC 3.A.1.1.3) family. As to quaternary structure, the complex is composed of two ATP-binding proteins (UgpC), two transmembrane proteins (UgpA and UgpE) and a solute-binding protein (UgpB).

The protein resides in the cell inner membrane. It carries out the reaction sn-glycerol 3-phosphate(out) + ATP + H2O = sn-glycerol 3-phosphate(in) + ADP + phosphate + H(+). Its function is as follows. Part of the ABC transporter complex UgpBAEC involved in sn-glycerol-3-phosphate (G3P) import. Responsible for energy coupling to the transport system. The protein is sn-glycerol-3-phosphate import ATP-binding protein UgpC of Paraburkholderia xenovorans (strain LB400).